The following is a 460-amino-acid chain: Probable carboxypeptidase TRV_02791 (460 aa).

Positions 1-22 (MQKTYLWALVSLLASSLVDARS) are cleaved as a signal peptide. An N-linked (GlcNAc...) asparagine glycan is attached at Asn98. Asp175 is a Zn(2+) binding site. Glu207 functions as the Proton acceptor in the catalytic mechanism. A Zn(2+)-binding site is contributed by Glu208. An N-linked (GlcNAc...) asparagine glycan is attached at Asn395.

The protein belongs to the peptidase M20A family. Requires Zn(2+) as cofactor.

Its subcellular location is the secreted. The protein is Probable carboxypeptidase TRV_02791 of Trichophyton verrucosum (strain HKI 0517).